The primary structure comprises 288 residues: MELLCCEVDPVRRAVPDANLLHDDRVLQNLLTIEERYLPQCSYFKCVQKDIQPYMRRMVATWMLEVCEEQKCEEEVFPLAINYLDRFLAGVPTPKTHLQLLGAVCMFLASKLKETIPLTAEKLCIYTDNSIKPQELLEWELVVLGKLKWNLAAVTPHDFIEHILRKLPQPNEKLSLIRKHAQTFIALCATDFKFAMYPPSMIATGSVGAAICGLQQDEDVSSLTGDALVDLLARITNTDVDCLKACQEQIEVVLLNSLQQYRQDQDGSKSEDELDQASTPTDVRDIDL.

The region spanning valine 26–leucine 151 is the Cyclin N-terminal domain. The disordered stretch occupies residues aspartate 264–leucine 288. Residue serine 270 is modified to Phosphoserine. Position 279 is a phosphothreonine (threonine 279).

The protein belongs to the cyclin family. Cyclin D subfamily. In terms of assembly, interacts with either CDK4 or CDK6 protein kinase to form a serine/threonine kinase holoenzyme complex. The cyclin subunit imparts substrate specificity to the complex. Post-translationally, phosphorylation at Thr-279 by MAP kinases is required for ubiquitination and degradation by the DCX(AMBRA1) complex. Ubiquitinated by the DCX(AMBRA1) complex during the transition from G1 to S cell phase, leading to its degradation: ubiquitination is dependent on Thr-279 phosphorylation. The DCX(AMBRA1) complex represents the major regulator of CCND2 stability during the G1/S transition. Polyubiquitinated by the SCF(FBXL2) complex, leading to proteasomal degradation.

The protein resides in the nucleus. It is found in the cytoplasm. The protein localises to the nucleus membrane. Functionally, regulatory component of the cyclin D2-CDK4 (DC) complex that phosphorylates and inhibits members of the retinoblastoma (RB) protein family including RB1 and regulates the cell-cycle during G(1)/S transition. Phosphorylation of RB1 allows dissociation of the transcription factor E2F from the RB/E2F complex and the subsequent transcription of E2F target genes which are responsible for the progression through the G(1) phase. Hypophosphorylates RB1 in early G(1) phase. Cyclin D-CDK4 complexes are major integrators of various mitogenenic and antimitogenic signals. In Sus scrofa (Pig), this protein is G1/S-specific cyclin-D2 (CCND2).